Consider the following 227-residue polypeptide: Cytochrome c oxidase subunit 2 (227 aa).

Over 1 to 14 the chain is Mitochondrial intermembrane; the sequence is MAYPFQLGFQDATS. The helical transmembrane segment at 15–45 threads the bilayer; sequence PIMEELLHFHDHTLMIVFLISSLVLYIISSM. The Mitochondrial matrix segment spans residues 46–59; that stretch reads LTTKLTHTSTMDAQ. Residues 60–87 form a helical membrane-spanning segment; it reads EVETIWTILPAIILILIALPSLRILYMM. Residues 88–227 lie on the Mitochondrial intermembrane side of the membrane; that stretch reads DEINNPSLTV…HFEEWSASML (140 aa). Positions 161, 196, 198, 200, 204, and 207 each coordinate Cu cation. Glutamate 198 serves as a coordination point for Mg(2+).

Belongs to the cytochrome c oxidase subunit 2 family. In terms of assembly, component of the cytochrome c oxidase (complex IV, CIV), a multisubunit enzyme composed of 14 subunits. The complex is composed of a catalytic core of 3 subunits MT-CO1, MT-CO2 and MT-CO3, encoded in the mitochondrial DNA, and 11 supernumerary subunits COX4I, COX5A, COX5B, COX6A, COX6B, COX6C, COX7A, COX7B, COX7C, COX8 and NDUFA4, which are encoded in the nuclear genome. The complex exists as a monomer or a dimer and forms supercomplexes (SCs) in the inner mitochondrial membrane with NADH-ubiquinone oxidoreductase (complex I, CI) and ubiquinol-cytochrome c oxidoreductase (cytochrome b-c1 complex, complex III, CIII), resulting in different assemblies (supercomplex SCI(1)III(2)IV(1) and megacomplex MCI(2)III(2)IV(2)). Found in a complex with TMEM177, COA6, COX18, COX20, SCO1 and SCO2. Interacts with TMEM177 in a COX20-dependent manner. Interacts with COX20. Interacts with COX16. Cu cation is required as a cofactor.

It is found in the mitochondrion inner membrane. It carries out the reaction 4 Fe(II)-[cytochrome c] + O2 + 8 H(+)(in) = 4 Fe(III)-[cytochrome c] + 2 H2O + 4 H(+)(out). Component of the cytochrome c oxidase, the last enzyme in the mitochondrial electron transport chain which drives oxidative phosphorylation. The respiratory chain contains 3 multisubunit complexes succinate dehydrogenase (complex II, CII), ubiquinol-cytochrome c oxidoreductase (cytochrome b-c1 complex, complex III, CIII) and cytochrome c oxidase (complex IV, CIV), that cooperate to transfer electrons derived from NADH and succinate to molecular oxygen, creating an electrochemical gradient over the inner membrane that drives transmembrane transport and the ATP synthase. Cytochrome c oxidase is the component of the respiratory chain that catalyzes the reduction of oxygen to water. Electrons originating from reduced cytochrome c in the intermembrane space (IMS) are transferred via the dinuclear copper A center (CU(A)) of subunit 2 and heme A of subunit 1 to the active site in subunit 1, a binuclear center (BNC) formed by heme A3 and copper B (CU(B)). The BNC reduces molecular oxygen to 2 water molecules using 4 electrons from cytochrome c in the IMS and 4 protons from the mitochondrial matrix. The sequence is that of Cytochrome c oxidase subunit 2 (MT-CO2) from Equus caballus (Horse).